Reading from the N-terminus, the 355-residue chain is Guanine nucleotide-binding protein G(i) subunit alpha-2 (355 aa).

Gly-2 carries the N-myristoyl glycine lipid modification. Cys-3 carries S-palmitoyl cysteine lipidation. The region spanning 32–355 (REVKLLLLGA…KNNLKDCGLF (324 aa)) is the G-alpha domain. Residues 35-48 (KLLLLGAGESGKST) are G1 motif. Residues 40 to 47 (GAGESGKS), 176 to 182 (LRTRVKT), 201 to 205 (DVGGQ), 270 to 273 (NKKD), and Ala-327 each bind GTP. Positions 47 and 182 each coordinate Mg(2+). Positions 174-182 (DVLRTRVKT) are G2 motif. Residues 197–206 (FKMFDVGGQR) form a G3 motif region. Residues 266-273 (ILFLNKKD) form a G4 motif region. The segment at 325–330 (TCATDT) is G5 motif.

It belongs to the G-alpha family. G(i/o/t/z) subfamily. As to quaternary structure, g proteins are composed of 3 units; alpha, beta and gamma. The alpha chain contains the guanine nucleotide binding site. In this context, interacts with GNB2. Interacts with UNC5B. Interacts with GPSM1. Interacts with RGS12 and RGS14. Interacts (inactive GDP-bound form) with NUCB1 (via GBA motif); the interaction leads to activation of GNAI3. Interacts (inactive GDP-bound form) with CCDC88C/DAPLE (via GBA motif). Interacts (inactive GDP-bound form) with CCDC8A/GIV (via GBA motif). Interacts with CXCR1 and CXCR2.

The protein resides in the cytoplasm. Its subcellular location is the cytoskeleton. The protein localises to the microtubule organizing center. It localises to the centrosome. It is found in the cell membrane. The protein resides in the membrane. In terms of biological role, guanine nucleotide-binding proteins (G proteins) are involved as modulators or transducers in various transmembrane signaling systems. The G(i) proteins are involved in hormonal regulation of adenylate cyclase: they inhibit the cyclase in response to beta-adrenergic stimuli. May play a role in cell division. The sequence is that of Guanine nucleotide-binding protein G(i) subunit alpha-2 (Gnai2) from Mus musculus (Mouse).